A 166-amino-acid chain; its full sequence is Large ribosomal subunit protein bL19 (166 aa).

It belongs to the bacterial ribosomal protein bL19 family. In terms of assembly, part of the 50S ribosomal subunit. Forms a cluster with proteins L3 and L14.

This protein is located at the 30S-50S ribosomal subunit interface and may play a role in the structure and function of the aminoacyl-tRNA binding site. Binds the 23S rRNA. This is Large ribosomal subunit protein bL19 (rplS) from Deinococcus radiodurans (strain ATCC 13939 / DSM 20539 / JCM 16871 / CCUG 27074 / LMG 4051 / NBRC 15346 / NCIMB 9279 / VKM B-1422 / R1).